A 174-amino-acid polypeptide reads, in one-letter code: RNA pyrophosphohydrolase (174 aa).

The 144-residue stretch at Gly-6–Lys-149 folds into the Nudix hydrolase domain. Residues Gly-38–Gly-59 carry the Nudix box motif.

Belongs to the Nudix hydrolase family. RppH subfamily. A divalent metal cation is required as a cofactor.

In terms of biological role, accelerates the degradation of transcripts by removing pyrophosphate from the 5'-end of triphosphorylated RNA, leading to a more labile monophosphorylated state that can stimulate subsequent ribonuclease cleavage. In Neisseria meningitidis serogroup C / serotype 2a (strain ATCC 700532 / DSM 15464 / FAM18), this protein is RNA pyrophosphohydrolase.